A 56-amino-acid polypeptide reads, in one-letter code: UPF0339 protein NMA1193/NMA1859 (56 aa).

This sequence belongs to the UPF0339 family.

This is UPF0339 protein NMA1193/NMA1859 from Neisseria meningitidis serogroup A / serotype 4A (strain DSM 15465 / Z2491).